Consider the following 419-residue polypeptide: Serine hydroxymethyltransferase (419 aa).

Residues L121 and 125–127 each bind (6S)-5,6,7,8-tetrahydrofolate; that span reads GHL. N6-(pyridoxal phosphate)lysine is present on K230. A (6S)-5,6,7,8-tetrahydrofolate-binding site is contributed by 355-357; sequence SPF.

This sequence belongs to the SHMT family. Homodimer. Pyridoxal 5'-phosphate serves as cofactor.

The protein localises to the cytoplasm. The enzyme catalyses (6R)-5,10-methylene-5,6,7,8-tetrahydrofolate + glycine + H2O = (6S)-5,6,7,8-tetrahydrofolate + L-serine. The protein operates within one-carbon metabolism; tetrahydrofolate interconversion. It participates in amino-acid biosynthesis; glycine biosynthesis; glycine from L-serine: step 1/1. Catalyzes the reversible interconversion of serine and glycine with tetrahydrofolate (THF) serving as the one-carbon carrier. This reaction serves as the major source of one-carbon groups required for the biosynthesis of purines, thymidylate, methionine, and other important biomolecules. Also exhibits THF-independent aldolase activity toward beta-hydroxyamino acids, producing glycine and aldehydes, via a retro-aldol mechanism. This chain is Serine hydroxymethyltransferase, found in Streptococcus uberis (strain ATCC BAA-854 / 0140J).